Here is a 346-residue protein sequence, read N- to C-terminus: UDP-3-O-acylglucosamine N-acyltransferase (346 aa).

The active-site Proton acceptor is the H240.

This sequence belongs to the transferase hexapeptide repeat family. LpxD subfamily. Homotrimer.

The catalysed reaction is a UDP-3-O-[(3R)-3-hydroxyacyl]-alpha-D-glucosamine + a (3R)-hydroxyacyl-[ACP] = a UDP-2-N,3-O-bis[(3R)-3-hydroxyacyl]-alpha-D-glucosamine + holo-[ACP] + H(+). It functions in the pathway bacterial outer membrane biogenesis; LPS lipid A biosynthesis. Functionally, catalyzes the N-acylation of UDP-3-O-acylglucosamine using 3-hydroxyacyl-ACP as the acyl donor. Is involved in the biosynthesis of lipid A, a phosphorylated glycolipid that anchors the lipopolysaccharide to the outer membrane of the cell. The sequence is that of UDP-3-O-acylglucosamine N-acyltransferase from Bacteroides fragilis (strain YCH46).